The sequence spans 174 residues: Superoxide dismutase [Cu-Zn] (174 aa).

A signal peptide spans 1-23 (MIRLSAAAALGLAAALAASPALA). His-68, His-70, and His-86 together coordinate Cu cation. Cysteines 75 and 170 form a disulfide. The Zn(2+) site is built by His-86, His-95, Asp-104, and Asp-107. His-150 serves as a coordination point for Cu cation.

It belongs to the Cu-Zn superoxide dismutase family. Homodimer. The cofactor is Cu cation. Zn(2+) is required as a cofactor.

The protein resides in the periplasm. The enzyme catalyses 2 superoxide + 2 H(+) = H2O2 + O2. Destroys radicals which are normally produced within the cells and which are toxic to biological systems. May function against extracytoplasmic toxic oxygen species. This chain is Superoxide dismutase [Cu-Zn] (sodC), found in Caulobacter vibrioides (strain ATCC 19089 / CIP 103742 / CB 15) (Caulobacter crescentus).